The following is a 328-amino-acid chain: GTPase Obg 2 (328 aa).

An Obg domain is found at 1–139 (MSFRREKFIE…HCVLLKLKIV (139 aa)). The region spanning 140 to 309 (SDVGIIGMPN…LHAQVKKAVV (170 aa)) is the OBG-type G domain. Residues 146-153 (GMPNAGKS), 171-175 (FTTLE), 192-195 (DIPG), 259-262 (NKCD), and 290-292 (GDE) contribute to the GTP site. Residues S153 and T173 each contribute to the Mg(2+) site.

Belongs to the TRAFAC class OBG-HflX-like GTPase superfamily. OBG GTPase family. As to quaternary structure, monomer. Mg(2+) serves as cofactor.

The protein localises to the cytoplasm. Functionally, an essential GTPase which binds GTP, GDP and possibly (p)ppGpp with moderate affinity, with high nucleotide exchange rates and a fairly low GTP hydrolysis rate. Plays a role in control of the cell cycle, stress response, ribosome biogenesis and in those bacteria that undergo differentiation, in morphogenesis control. The sequence is that of GTPase Obg 2 from Anaplasma marginale (strain Florida).